The sequence spans 191 residues: Methylated-DNA--protein-cysteine methyltransferase (191 aa).

Positions 120 and 134 each coordinate DNA. Cys151 functions as the Nucleophile; methyl group acceptor in the catalytic mechanism.

The protein belongs to the MGMT family.

The protein resides in the nucleus. The enzyme catalyses a 6-O-methyl-2'-deoxyguanosine in DNA + L-cysteinyl-[protein] = S-methyl-L-cysteinyl-[protein] + a 2'-deoxyguanosine in DNA. The catalysed reaction is a 4-O-methyl-thymidine in DNA + L-cysteinyl-[protein] = a thymidine in DNA + S-methyl-L-cysteinyl-[protein]. Functionally, involved in the cellular defense against the biological effects of O6-methylguanine (O6-MeG) and O4-methylthymine (O4-MeT) in DNA. Repairs the methylated nucleobase in DNA by stoichiometrically transferring the methyl group to a cysteine residue in the enzyme. This is a suicide reaction: the enzyme is irreversibly inactivated. In Debaryomyces hansenii (strain ATCC 36239 / CBS 767 / BCRC 21394 / JCM 1990 / NBRC 0083 / IGC 2968) (Yeast), this protein is Methylated-DNA--protein-cysteine methyltransferase (MGT1).